Reading from the N-terminus, the 366-residue chain is L-tyrosine C(3)-methyltransferase (366 aa).

Residues 1–12 (MTISLENTTVGQ) are compositionally biased toward polar residues. The segment at 1 to 22 (MTISLENTTVGQNPAGGPPTGK) is disordered. Glu223 is a binding site for S-adenosyl-L-methionine.

This sequence belongs to the class I-like SAM-binding methyltransferase superfamily. Cation-independent O-methyltransferase family.

The enzyme catalyses L-tyrosine + S-adenosyl-L-methionine = 3-methyl-L-tyrosine + S-adenosyl-L-homocysteine + H(+). It functions in the pathway antibiotic biosynthesis. C-methyltransferase that mediates the methylation of tyrosine into 3-methyl-L-tyrosine (3-Me-Tyr) in biosynthesis of saframycin A, a potent antitumor antibiotic that belongs to the tetrahydroisoquinoline family. Involved in biosynthesis of 3-hydroxy-5-methyl-O-methyltyrosine (3-OH-5-Me-OMe-Tyr), a core structure of saframycin A. In Streptomyces lavendulae, this protein is L-tyrosine C(3)-methyltransferase.